The following is a 433-amino-acid chain: MVSTTSLKTTKSEDIFAAAQKLMPGGVSSPVRAFKSVGGQPIVFDHVKGAYIWDVDGNQYIDYVGTWGPAICGHAHPEVIAALHDALDRGTSFGAPCLLENVLAEMVIDAVPSIEMVRFVNSGTEACMSVLRLMRAFTGRDKIIKFQGCYHGHADMFLVQAGSGVATLGLPDSPGVPKTTTANTLTAPYNDLEAVKALFAENPDEIAGVILEPVVGNSGFVVPDGGFLQGLRELTNEYGALLVFDEVMTGFRLSYGGAQEKFGVTPDLTTLGKVIGGGLPVGAYGGRKDIMSMVAPAGPMYQAGTLSGNPLAMTAGIKTLELLQKPGTYNQLEQITQQLSEGLLKIAKEAGHQVCGGYIGAMFGLFFTEGPVRNYDDAKKSDLAKFGRFHRGMLEKGVYLAPSQFEAGFTSLAHTSEDIEKTLAAAKDVLSNL.

Lys-273 carries the post-translational modification N6-(pyridoxal phosphate)lysine.

Belongs to the class-III pyridoxal-phosphate-dependent aminotransferase family. HemL subfamily. Homodimer. Pyridoxal 5'-phosphate is required as a cofactor.

It localises to the cytoplasm. The catalysed reaction is (S)-4-amino-5-oxopentanoate = 5-aminolevulinate. Its pathway is porphyrin-containing compound metabolism; protoporphyrin-IX biosynthesis; 5-aminolevulinate from L-glutamyl-tRNA(Glu): step 2/2. It functions in the pathway porphyrin-containing compound metabolism; chlorophyll biosynthesis. This Crocosphaera subtropica (strain ATCC 51142 / BH68) (Cyanothece sp. (strain ATCC 51142)) protein is Glutamate-1-semialdehyde 2,1-aminomutase.